Reading from the N-terminus, the 391-residue chain is 8-amino-7-oxononanoate synthase (391 aa).

R24 serves as a coordination point for substrate. 112–113 (GY) contributes to the pyridoxal 5'-phosphate binding site. H137 contacts substrate. Pyridoxal 5'-phosphate is bound by residues S183, H211, and T240. At K243 the chain carries N6-(pyridoxal phosphate)lysine. T357 contributes to the substrate binding site.

This sequence belongs to the class-II pyridoxal-phosphate-dependent aminotransferase family. BioF subfamily. Homodimer. It depends on pyridoxal 5'-phosphate as a cofactor.

The catalysed reaction is 6-carboxyhexanoyl-[ACP] + L-alanine + H(+) = (8S)-8-amino-7-oxononanoate + holo-[ACP] + CO2. Its pathway is cofactor biosynthesis; biotin biosynthesis. Catalyzes the decarboxylative condensation of pimeloyl-[acyl-carrier protein] and L-alanine to produce 8-amino-7-oxononanoate (AON), [acyl-carrier protein], and carbon dioxide. The protein is 8-amino-7-oxononanoate synthase of Alkalilimnicola ehrlichii (strain ATCC BAA-1101 / DSM 17681 / MLHE-1).